We begin with the raw amino-acid sequence, 548 residues long: Fumarate hydratase class I, aerobic (548 aa).

Residues Cys105, Cys224, and Cys318 each contribute to the [4Fe-4S] cluster site.

Belongs to the class-I fumarase family. As to quaternary structure, homodimer. [4Fe-4S] cluster is required as a cofactor.

The catalysed reaction is (S)-malate = fumarate + H2O. It catalyses the reaction oxaloacetate = enol-oxaloacetate. It functions in the pathway carbohydrate metabolism; tricarboxylic acid cycle; (S)-malate from fumarate: step 1/1. Functionally, catalyzes the reversible hydration of fumarate to (S)-malate. Functions as an aerobic enzyme in the direction of malate formation as part of the citric acid cycle. Accounts for about 80% of the fumarase activity when the bacteria grow aerobically. To a lesser extent, also displays D-tartrate dehydratase activity in vitro, but is not able to convert (R)-malate, L-tartrate or meso-tartrate. Can also catalyze the isomerization of enol- to keto-oxaloacetate. The protein is Fumarate hydratase class I, aerobic of Escherichia coli O6:H1 (strain CFT073 / ATCC 700928 / UPEC).